The chain runs to 211 residues: Riboflavin kinase (211 aa).

An H-T-H motif-like region spans residues 1 to 85 (MKKILMLIEL…CDKISNALSK (85 aa)). Residues 86 to 211 (GVIVGEVVSG…GDRVRLEVIQ (126 aa)) are riboflavin kinase. 95-100 (GLGEGA) contributes to the CDP binding site. Thr-122 and Asn-124 together coordinate Mg(2+). The FMN site is built by Thr-178 and Glu-186. 191–194 (VNLR) contributes to the CDP binding site.

Belongs to the archaeal riboflavin kinase family. Mg(2+) serves as cofactor.

The enzyme catalyses riboflavin + CTP = CDP + FMN + H(+). Its pathway is cofactor biosynthesis; FMN biosynthesis; FMN from riboflavin (CTP route): step 1/1. In terms of biological role, catalyzes the CTP-dependent phosphorylation of riboflavin (vitamin B2) to form flavin mononucleotide (FMN). This Thermococcus kodakarensis (strain ATCC BAA-918 / JCM 12380 / KOD1) (Pyrococcus kodakaraensis (strain KOD1)) protein is Riboflavin kinase (ribK).